The following is a 486-amino-acid chain: Ribosomal RNA small subunit methyltransferase F (486 aa).

S-adenosyl-L-methionine-binding positions include 124 to 130 (ASAPGSK), E148, D175, and D193. The Nucleophile role is filled by C246.

The protein belongs to the class I-like SAM-binding methyltransferase superfamily. RsmB/NOP family.

The protein localises to the cytoplasm. The catalysed reaction is cytidine(1407) in 16S rRNA + S-adenosyl-L-methionine = 5-methylcytidine(1407) in 16S rRNA + S-adenosyl-L-homocysteine + H(+). Specifically methylates the cytosine at position 1407 (m5C1407) of 16S rRNA. In Shewanella baltica (strain OS195), this protein is Ribosomal RNA small subunit methyltransferase F.